A 99-amino-acid chain; its full sequence is Integration host factor subunit alpha (99 aa).

This sequence belongs to the bacterial histone-like protein family. As to quaternary structure, heterodimer of an alpha and a beta chain.

Its function is as follows. This protein is one of the two subunits of integration host factor, a specific DNA-binding protein that functions in genetic recombination as well as in transcriptional and translational control. This is Integration host factor subunit alpha from Enterobacter sp. (strain 638).